The chain runs to 62 residues: MVREARANRSSFLKVKCPDCDNEQTVFSKASTTVKCVVCGRDLATPTGGKANLKAEIISEFK.

4 residues coordinate Zn(2+): Cys-17, Cys-20, Cys-36, and Cys-39. Residues Cys-17–Cys-39 form a C4-type zinc finger.

Belongs to the eukaryotic ribosomal protein eS27 family. As to quaternary structure, part of the 30S ribosomal subunit. Zn(2+) serves as cofactor.

The protein is Small ribosomal subunit protein eS27 of Methanoregula boonei (strain DSM 21154 / JCM 14090 / 6A8).